We begin with the raw amino-acid sequence, 474 residues long: Ubiquinol-cytochrome-c reductase complex core protein 2, mitochondrial (474 aa).

Residues 1–42 constitute a mitochondrion transit peptide; the sequence is MKSVVRSKGTQALFRRFSSALGDSINPNQVGVGDNVIRVNGR.

Belongs to the peptidase M16 family. UQCRC2/QCR2 subfamily. In terms of assembly, component of the ubiquinol-cytochrome c oxidoreductase (cytochrome b-c1 complex, complex III, CIII), a multisubunit enzyme composed of 3 respiratory subunits cytochrome b, cytochrome c1 and Rieske protein, 2 core protein subunits, and additional low-molecular weight protein subunits. The complex exists as an obligatory dimer and forms supercomplexes (SCs) in the inner mitochondrial membrane with cytochrome c oxidase (complex IV, CIV).

Its subcellular location is the mitochondrion inner membrane. Its function is as follows. Component of the ubiquinol-cytochrome c oxidoreductase, a multisubunit transmembrane complex that is part of the mitochondrial electron transport chain which drives oxidative phosphorylation. The respiratory chain contains 3 multisubunit complexes succinate dehydrogenase (complex II, CII), ubiquinol-cytochrome c oxidoreductase (cytochrome b-c1 complex, complex III, CIII) and cytochrome c oxidase (complex IV, CIV), that cooperate to transfer electrons derived from NADH and succinate to molecular oxygen, creating an electrochemical gradient over the inner membrane that drives transmembrane transport and the ATP synthase. The cytochrome b-c1 complex catalyzes electron transfer from ubiquinol to cytochrome c, linking this redox reaction to translocation of protons across the mitochondrial inner membrane, with protons being carried across the membrane as hydrogens on the quinol. In the process called Q cycle, 2 protons are consumed from the matrix, 4 protons are released into the intermembrane space and 2 electrons are passed to cytochrome c. This Euglena gracilis protein is Ubiquinol-cytochrome-c reductase complex core protein 2, mitochondrial.